Here is a 308-residue protein sequence, read N- to C-terminus: Tyrosine recombinase XerD (308 aa).

In terms of domain architecture, Core-binding (CB) spans 3–89 (NGFTRLTEQF…SIHEFHRFAL (87 aa)). Residues 110–301 (TLPDVLTVDE…SPETLIETYL (192 aa)) enclose the Tyr recombinase domain. Catalysis depends on residues arginine 153, lysine 177, histidine 253, arginine 256, and histidine 279. The active-site O-(3'-phospho-DNA)-tyrosine intermediate is the tyrosine 288.

The protein belongs to the 'phage' integrase family. XerD subfamily. As to quaternary structure, forms a cyclic heterotetrameric complex composed of two molecules of XerC and two molecules of XerD.

It is found in the cytoplasm. In terms of biological role, site-specific tyrosine recombinase, which acts by catalyzing the cutting and rejoining of the recombining DNA molecules. The XerC-XerD complex is essential to convert dimers of the bacterial chromosome into monomers to permit their segregation at cell division. It also contributes to the segregational stability of plasmids. This Bifidobacterium longum (strain NCC 2705) protein is Tyrosine recombinase XerD.